Consider the following 126-residue polypeptide: Ribonuclease VapC23 (126 aa).

Residues 2-118 (IFVDTNVFMY…GVTRIKTFDH (117 aa)) form the PINc domain. Mg(2+) is bound by residues D5 and D98.

Belongs to the PINc/VapC protein family. Mg(2+) serves as cofactor.

In terms of biological role, toxic component of a type II toxin-antitoxin (TA) system. An RNase. The cognate antitoxin is VapB23. The polypeptide is Ribonuclease VapC23 (Mycobacterium tuberculosis (strain CDC 1551 / Oshkosh)).